Here is a 214-residue protein sequence, read N- to C-terminus: Adenylate kinase (214 aa).

Position 15–20 (15–20 (GAGKGT)) interacts with ATP. The interval 35-64 (ASGDLFREAIKNQSVIGRKIAAIISQGGYV) is NMP. Residues Ser36, Arg41, 62-64 (GYV), 90-93 (GYPR), and Gln97 contribute to the AMP site. The LID stretch occupies residues 127–164 (NRVICNNCNSVYNLLFQKPLVENSCDQCSAKLVKRSDD). Arg128 lines the ATP pocket. Zn(2+) is bound by residues Cys131 and Cys134. Position 137 to 138 (137 to 138 (VY)) interacts with ATP. 2 residues coordinate Zn(2+): Cys151 and Cys154. 2 residues coordinate AMP: Arg161 and Arg172. Leu200 provides a ligand contact to ATP.

It belongs to the adenylate kinase family. Monomer.

The protein localises to the cytoplasm. The catalysed reaction is AMP + ATP = 2 ADP. It functions in the pathway purine metabolism; AMP biosynthesis via salvage pathway; AMP from ADP: step 1/1. Its function is as follows. Catalyzes the reversible transfer of the terminal phosphate group between ATP and AMP. Plays an important role in cellular energy homeostasis and in adenine nucleotide metabolism. This Mycoplasma genitalium (strain ATCC 33530 / DSM 19775 / NCTC 10195 / G37) (Mycoplasmoides genitalium) protein is Adenylate kinase.